The sequence spans 46 residues: Esculentin-1SEa (46 aa).

Cys40 and Cys46 are joined by a disulfide.

In terms of tissue distribution, expressed by the skin glands.

The protein resides in the secreted. Its function is as follows. Mast cell degranulating peptide. Causes histamine release from rat peritoneal mast cells in vitro. Has antibacterial activity against the Gram-negative bacterium E.coli K12 and Gram-positive bacterium M.luteus NCT C2665. This chain is Esculentin-1SEa, found in Lithobates sevosus (Dusky gopher frog).